Here is a 368-residue protein sequence, read N- to C-terminus: Apolipoprotein A-V (368 aa).

An N-terminal signal peptide occupies residues 1–20 (MAAVITWALALLAVFASTQA). A Phosphoserine modification is found at Ser-52. A coiled-coil region spans residues 231 to 255 (TRKAKDLHTSIQRNLDQLRDELSAF). A disordered region spans residues 305 to 333 (EEIQHQLAPPPPSHSAFAPELGHSDSNKA).

This sequence belongs to the apolipoprotein A1/A4/E family. As to quaternary structure, interacts with GPIHBP1. Interacts with SORL1; this interaction leads to APOA5 internalization and sorting either to lysosomes and degradation, or to the trans-Golgi network. In terms of processing, phosphorylated by FAM20C in the extracellular medium. As to expression, liver.

The protein localises to the secreted. It localises to the early endosome. It is found in the late endosome. The protein resides in the golgi apparatus. Its subcellular location is the trans-Golgi network. Minor apolipoprotein mainly associated with HDL and to a lesser extent with VLDL. May also be associated with chylomicrons. Important determinant of plasma triglyceride (TG) levels by both being a potent stimulator of apo-CII lipoprotein lipase (LPL) TG hydrolysis and an inhibitor of the hepatic VLDL-TG production rate (without affecting the VLDL-apoB production rate). Activates poorly lecithin:cholesterol acyltransferase (LCAT) and does not enhance efflux of cholesterol from macrophages. Binds heparin. The sequence is that of Apolipoprotein A-V (Apoa5) from Mus musculus (Mouse).